The following is a 398-amino-acid chain: Ethanolaminephosphotransferase 1 (398 aa).

Alanine 2 carries the post-translational modification N-acetylalanine. The next 10 membrane-spanning stretches (helical) occupy residues 47–69 (WLAP…LLLT), 84–103 (HVPD…AYTL), 123–145 (LFDH…SIFG), 150–172 (GVSV…LSHW), 179–201 (VLFL…IVTA), 221–243 (LFTA…LNFF), 256–278 (VYEA…VWIL), 291–310 (IFYF…LIVC), 319–341 (TLNW…AATS), and 345–367 (SALL…VQVV). A non-standard amino acid (selenocysteine) is located at residue selenocysteine 388.

This sequence belongs to the CDP-alcohol phosphatidyltransferase class-I family. Mg(2+) serves as cofactor. Mn(2+) is required as a cofactor.

The protein localises to the endoplasmic reticulum membrane. The enzyme catalyses CDP-ethanolamine + a 1,2-diacyl-sn-glycerol = a 1,2-diacyl-sn-glycero-3-phosphoethanolamine + CMP + H(+). The catalysed reaction is 1-O-alkyl-2-acyl-sn-glycerol + CDP-ethanolamine = a 1-O-alkyl-2-acyl-sn-glycero-3-phosphoethanolamine + CMP + H(+). It participates in phospholipid metabolism; phosphatidylethanolamine biosynthesis; phosphatidylethanolamine from ethanolamine: step 3/3. Functionally, ethanolaminephosphotransferase that catalyzes the transfer of phosphoethanolamine (PE) from CDP-ethanolamine to lipid acceptors, the final step in the synthesis of PE via the 'Kennedy' pathway. PE is the second most abundant phospholipid of membranes in mammals and is involved in various membrane-related cellular processes. The enzyme is critical for the synthesis of several PE species and also catalyzes the synthesis of plasmanyl-PE, a lipid required for proper myelination and neurodevelopment, from 1-alkyl-2-acylglycerol. The protein is Ethanolaminephosphotransferase 1 of Mus musculus (Mouse).